The primary structure comprises 492 residues: Regulatory protein ViaA (492 aa).

The protein belongs to the ViaA family. In terms of assembly, homodimer. Interacts with RavA.

It localises to the cytoplasm. Its function is as follows. Component of the RavA-ViaA chaperone complex, which may act on the membrane to optimize the function of some of the respiratory chains. ViaA stimulates the ATPase activity of RavA. This Pectobacterium atrosepticum (strain SCRI 1043 / ATCC BAA-672) (Erwinia carotovora subsp. atroseptica) protein is Regulatory protein ViaA.